Reading from the N-terminus, the 346-residue chain is Guanine nucleotide-binding protein subunit beta-2 (346 aa).

WD repeat units follow at residues 57–96 (GHINKVNSVHFAGDSRHCVTGSLDGKLIIWDTWTANKVQV), 99–138 (LRSAWVMTVAFSPSGNFVACGGMDNQCTVYDVNNRDASGV), 147–185 (GYEGFLSSCRFLDDTHLITGSGDMKICHWDLEKGVKTMD), 188–227 (GHAGDIAGLSLSPDMNTYITGSVDKTAKLWDVREETHKQM), 230–269 (GHEMDVNSVCYHPSGNGFASASEDQTARLYDIRADQQIAL), 274–313 (QKNTGFTSCALSTSGRYLLCSGIEGNIHSFDTMKVCHNGM), and 316–346 (GHENRITCISLSPNGMCLASTSWDQQVRLWL).

It belongs to the WD repeat G protein beta family. As to quaternary structure, g proteins are composed of 3 units, alpha, beta and gamma. Interacts with Ggammae/Guanine nucleotide-binding protein subunit gamma-e.

Guanine nucleotide-binding proteins (G proteins) are involved as modulators or transducers in various transmembrane signaling systems. The beta and gamma chains are required for the GTPase activity, for replacement of GDP by GTP, and for G protein-effector interaction. This is Guanine nucleotide-binding protein subunit beta-2 from Calliphora vicina (Blue blowfly).